A 264-amino-acid polypeptide reads, in one-letter code: Glutamate racemase (264 aa).

Residues 10–11 (DS) and 42–43 (YG) contribute to the substrate site. Cys73 acts as the Proton donor/acceptor in catalysis. Residue 74–75 (NT) coordinates substrate. Cys183 (proton donor/acceptor) is an active-site residue. 184-185 (TH) provides a ligand contact to substrate.

This sequence belongs to the aspartate/glutamate racemases family. In terms of assembly, homodimer.

It carries out the reaction L-glutamate = D-glutamate. It participates in cell wall biogenesis; peptidoglycan biosynthesis. In terms of biological role, provides the (R)-glutamate required for cell wall biosynthesis. In Streptococcus pyogenes serotype M1, this protein is Glutamate racemase.